Reading from the N-terminus, the 136-residue chain is Glutaredoxin-C8 (136 aa).

Residues 33–135 form the Glutaredoxin domain; the sequence is SSFVKSTVKA…KLLNIDVKED (103 aa). Cysteines 53 and 56 form a disulfide.

It belongs to the glutaredoxin family. CPYC subfamily.

The protein resides in the cytoplasm. Functionally, has a glutathione-disulfide oxidoreductase activity in the presence of NADPH and glutathione reductase. Reduces low molecular weight disulfides and proteins. The protein is Glutaredoxin-C8 (GRXC8) of Oryza sativa subsp. japonica (Rice).